The following is a 189-amino-acid chain: Stathmin-4 (189 aa).

Residues C20 and C22 are each lipidated (S-palmitoyl cysteine). An SLD domain is found at 48 to 189; sequence SDMEVIELNK…NKELKEEASR (142 aa). The residue at position 90 (S90) is a Phosphoserine. Residues 90-188 are a coiled coil; sequence SLEEIQKKLE…KNKELKEEAS (99 aa). The segment at 168–189 is disordered; the sequence is QEKDKHAEEVRKNKELKEEASR.

This sequence belongs to the stathmin family.

Its subcellular location is the golgi apparatus. It localises to the cell projection. It is found in the growth cone. The protein resides in the axon. Functionally, exhibits microtubule-destabilizing activity. The polypeptide is Stathmin-4 (STMN4) (Homo sapiens (Human)).